A 252-amino-acid polypeptide reads, in one-letter code: ATP-dependent L-serine kinase (252 aa).

Glu35 is a catalytic residue. Val73 provides a ligand contact to O-phospho-L-serine. Residue Asp74 participates in Mg(2+) binding. O-phospho-L-serine is bound by residues Gly75, His76, His77, Trp107, Lys231, Thr233, and His235.

This sequence belongs to the SerK family. In terms of assembly, monomer. It depends on Mg(2+) as a cofactor.

The catalysed reaction is L-serine + ATP = O-phospho-L-serine + ADP + H(+). Free serine kinase that uses ATP to phosphorylate L-serine to yield O-phospho-L-serine and ADP. Can use ATP, UTP, CTP, GTP and the inorganic polyphosphates triphosphate and tetraphosphate as phosphate donors, with a preference for nucleoside 5'-triphosphates, but cannot use ADP. The catalytic efficiency is highest for ATP. Is specific for L-serine and cannot phosphorylate structurally similar compounds such as D-serine, L-threonine, L-homoserine, hydroxypyruvate, 3-hydroxypropionate and DL-glycerate. Likely contributes to serine metabolism, including cysteine biosynthesis. This Staphylothermus marinus (strain ATCC 43588 / DSM 3639 / JCM 9404 / F1) protein is ATP-dependent L-serine kinase.